Here is a 593-residue protein sequence, read N- to C-terminus: Cell surface glycoprotein (593 aa).

The N-terminal stretch at 1-22 (MRKFTLLMLLLIVISMSGIAGA) is a signal peptide. Residues Asn29, Asn58, Asn66, Asn74, Asn114, Asn122, Asn145, Asn148, Asn158, Asn176, Asn208, Asn231, Asn326, Asn336, Asn340, Asn431, Asn471, Asn500, and Asn516 are each glycosylated (N-linked (GalNAc...) asparagine).

N-glycosylated; contains glycans composed of methyl-Man, Man and GalNAc residues in a molar ratio of 2:3:1.

It localises to the secreted. Its subcellular location is the cell wall. The protein localises to the S-layer. In terms of biological role, the S-layer is a paracrystalline mono-layered assembly of proteins which coat the surface of the cell. This chain is Cell surface glycoprotein (slgA), found in Methanothermus fervidus (strain ATCC 43054 / DSM 2088 / JCM 10308 / V24 S).